A 151-amino-acid polypeptide reads, in one-letter code: Deoxyuridine 5'-triphosphate nucleotidohydrolase (151 aa).

Substrate-binding positions include 70-72, Asn83, 87-89, and Met97; these read RSG and LID.

The protein belongs to the dUTPase family. The cofactor is Mg(2+).

It catalyses the reaction dUTP + H2O = dUMP + diphosphate + H(+). Its pathway is pyrimidine metabolism; dUMP biosynthesis; dUMP from dCTP (dUTP route): step 2/2. This enzyme is involved in nucleotide metabolism: it produces dUMP, the immediate precursor of thymidine nucleotides and it decreases the intracellular concentration of dUTP so that uracil cannot be incorporated into DNA. The sequence is that of Deoxyuridine 5'-triphosphate nucleotidohydrolase from Glaesserella parasuis serovar 5 (strain SH0165) (Haemophilus parasuis).